The following is a 206-amino-acid chain: Imidazole glycerol phosphate synthase subunit hisH (206 aa).

In terms of domain architecture, Glutamine amidotransferase type-1 spans 2–206 (KVGLVDYSMG…REVMKKAASL (205 aa)). The active-site Nucleophile is the C80. Active-site residues include H184 and E186.

As to quaternary structure, heterodimer of hisH and hisF.

It localises to the plastid. It is found in the chloroplast. The catalysed reaction is 5-[(5-phospho-1-deoxy-D-ribulos-1-ylimino)methylamino]-1-(5-phospho-beta-D-ribosyl)imidazole-4-carboxamide + L-glutamine = D-erythro-1-(imidazol-4-yl)glycerol 3-phosphate + 5-amino-1-(5-phospho-beta-D-ribosyl)imidazole-4-carboxamide + L-glutamate + H(+). It carries out the reaction L-glutamine + H2O = L-glutamate + NH4(+). It functions in the pathway amino-acid biosynthesis; L-histidine biosynthesis; L-histidine from 5-phospho-alpha-D-ribose 1-diphosphate: step 5/9. In terms of biological role, IGPS catalyzes the conversion of PRFAR and glutamine to IGP, AICAR and glutamate. The HisH subunit catalyzes the hydrolysis of glutamine to glutamate and ammonia as part of the synthesis of IGP and AICAR. The resulting ammonia molecule is channeled to the active site of HisF. The polypeptide is Imidazole glycerol phosphate synthase subunit hisH (Cyanidioschyzon merolae (strain NIES-3377 / 10D) (Unicellular red alga)).